Reading from the N-terminus, the 499-residue chain is Bifunctional purine biosynthesis protein PurH (499 aa).

One can recognise an MGS-like domain in the interval 1–144 (MIKRALISVF…KNFKDVVVLT (144 aa)).

It belongs to the PurH family.

The catalysed reaction is (6R)-10-formyltetrahydrofolate + 5-amino-1-(5-phospho-beta-D-ribosyl)imidazole-4-carboxamide = 5-formamido-1-(5-phospho-D-ribosyl)imidazole-4-carboxamide + (6S)-5,6,7,8-tetrahydrofolate. It catalyses the reaction IMP + H2O = 5-formamido-1-(5-phospho-D-ribosyl)imidazole-4-carboxamide. It functions in the pathway purine metabolism; IMP biosynthesis via de novo pathway; 5-formamido-1-(5-phospho-D-ribosyl)imidazole-4-carboxamide from 5-amino-1-(5-phospho-D-ribosyl)imidazole-4-carboxamide (10-formyl THF route): step 1/1. Its pathway is purine metabolism; IMP biosynthesis via de novo pathway; IMP from 5-formamido-1-(5-phospho-D-ribosyl)imidazole-4-carboxamide: step 1/1. The protein is Bifunctional purine biosynthesis protein PurH of Clostridium botulinum (strain Loch Maree / Type A3).